Consider the following 361-residue polypeptide: Peptide chain release factor 1 (361 aa).

At Gln-236 the chain carries N5-methylglutamine.

Belongs to the prokaryotic/mitochondrial release factor family. Post-translationally, methylated by PrmC. Methylation increases the termination efficiency of RF1.

It is found in the cytoplasm. In terms of biological role, peptide chain release factor 1 directs the termination of translation in response to the peptide chain termination codons UAG and UAA. This chain is Peptide chain release factor 1, found in Lactobacillus delbrueckii subsp. bulgaricus (strain ATCC 11842 / DSM 20081 / BCRC 10696 / JCM 1002 / NBRC 13953 / NCIMB 11778 / NCTC 12712 / WDCM 00102 / Lb 14).